A 234-amino-acid chain; its full sequence is Sugar fermentation stimulation protein homolog (234 aa).

It belongs to the SfsA family.

The sequence is that of Sugar fermentation stimulation protein homolog from Enterobacter sp. (strain 638).